A 595-amino-acid chain; its full sequence is DNA primase (595 aa).

A CHC2-type zinc finger spans residues 38–62 (CPFHDEKTPSFIVYPTRGHYHCYGC). In terms of domain architecture, Toprim spans 251 to 331 (RRVILVEGQA…GITAIVCRLP (81 aa)). The Mg(2+) site is built by glutamate 257, aspartate 302, and aspartate 304. Residues 430 to 441 (KGKKVSAKEPSS) show a composition bias toward basic and acidic residues. A disordered region spans residues 430–451 (KGKKVSAKEPSSESKQTSTEGK).

It belongs to the DnaG primase family. In terms of assembly, monomer. Interacts with DnaB. The cofactor is Zn(2+). It depends on Mg(2+) as a cofactor.

The catalysed reaction is ssDNA + n NTP = ssDNA/pppN(pN)n-1 hybrid + (n-1) diphosphate.. Functionally, RNA polymerase that catalyzes the synthesis of short RNA molecules used as primers for DNA polymerase during DNA replication. The chain is DNA primase from Chlamydia trachomatis serovar D (strain ATCC VR-885 / DSM 19411 / UW-3/Cx).